A 425-amino-acid polypeptide reads, in one-letter code: Enolase (425 aa).

Glutamine 161 is a (2R)-2-phosphoglycerate binding site. The Proton donor role is filled by glutamate 203. Mg(2+)-binding residues include aspartate 240, glutamate 283, and aspartate 310. Residues lysine 335, arginine 364, serine 365, and lysine 386 each contribute to the (2R)-2-phosphoglycerate site. Lysine 335 acts as the Proton acceptor in catalysis.

Belongs to the enolase family. As to quaternary structure, component of the RNA degradosome, a multiprotein complex involved in RNA processing and mRNA degradation. Requires Mg(2+) as cofactor.

It is found in the cytoplasm. Its subcellular location is the secreted. The protein resides in the cell surface. The catalysed reaction is (2R)-2-phosphoglycerate = phosphoenolpyruvate + H2O. It functions in the pathway carbohydrate degradation; glycolysis; pyruvate from D-glyceraldehyde 3-phosphate: step 4/5. In terms of biological role, catalyzes the reversible conversion of 2-phosphoglycerate (2-PG) into phosphoenolpyruvate (PEP). It is essential for the degradation of carbohydrates via glycolysis. This Ruthia magnifica subsp. Calyptogena magnifica protein is Enolase.